A 391-amino-acid polypeptide reads, in one-letter code: GTPase Obg (391 aa).

One can recognise an Obg domain in the interval 1-159 (MKFLDQAKIF…IWVWLRLKLI (159 aa)). Residues 160–327 (ADAGLIGLPN…VLRVMATHVD (168 aa)) enclose the OBG-type G domain. Residues 166-173 (GLPNAGKS), 191-195 (FTTLH), 212-215 (DIPG), 279-282 (SKID), and 308-310 (SAI) contribute to the GTP site. 2 residues coordinate Mg(2+): Ser-173 and Thr-193. The tract at residues 352–391 (TGIDHGYNRPSAVVDWEDAPFDDDDDDDGDESGDKGQWTR) is disordered. Positions 366 to 382 (DWEDAPFDDDDDDDGDE) are enriched in acidic residues.

This sequence belongs to the TRAFAC class OBG-HflX-like GTPase superfamily. OBG GTPase family. As to quaternary structure, monomer. The cofactor is Mg(2+).

Its subcellular location is the cytoplasm. In terms of biological role, an essential GTPase which binds GTP, GDP and possibly (p)ppGpp with moderate affinity, with high nucleotide exchange rates and a fairly low GTP hydrolysis rate. Plays a role in control of the cell cycle, stress response, ribosome biogenesis and in those bacteria that undergo differentiation, in morphogenesis control. In Rhodospirillum rubrum (strain ATCC 11170 / ATH 1.1.1 / DSM 467 / LMG 4362 / NCIMB 8255 / S1), this protein is GTPase Obg.